The sequence spans 236 residues: Purine nucleoside phosphorylase DeoD-type 2 (236 aa).

His5 is an a purine D-ribonucleoside binding site. Phosphate-binding positions include Gly21, Arg25, Arg44, and 88 to 91; that span reads RIGS. Residues 180 to 182 and 204 to 205 each bind a purine D-ribonucleoside; these read DME and SD. The active-site Proton donor is Asp205.

It belongs to the PNP/UDP phosphorylase family. As to quaternary structure, homohexamer; trimer of homodimers.

The enzyme catalyses a purine D-ribonucleoside + phosphate = a purine nucleobase + alpha-D-ribose 1-phosphate. It catalyses the reaction a purine 2'-deoxy-D-ribonucleoside + phosphate = a purine nucleobase + 2-deoxy-alpha-D-ribose 1-phosphate. Its function is as follows. Catalyzes the reversible phosphorolytic breakdown of the N-glycosidic bond in the beta-(deoxy)ribonucleoside molecules, with the formation of the corresponding free purine bases and pentose-1-phosphate. This chain is Purine nucleoside phosphorylase DeoD-type 2, found in Vibrio cholerae serotype O1 (strain ATCC 39315 / El Tor Inaba N16961).